A 301-amino-acid chain; its full sequence is Probable alpha-L-glutamate ligase (301 aa).

Positions 104–287 (LQLLSRKGVG…VAALVMEFIE (184 aa)) constitute an ATP-grasp domain. ATP is bound by residues K141, 178-179 (EY), D187, and 211-213 (RSN). Positions 248, 260, and 262 each coordinate Mg(2+). Mn(2+) is bound by residues D248, E260, and N262.

The protein belongs to the RimK family. Mg(2+) serves as cofactor. It depends on Mn(2+) as a cofactor.

The polypeptide is Probable alpha-L-glutamate ligase (Saccharophagus degradans (strain 2-40 / ATCC 43961 / DSM 17024)).